The following is a 184-amino-acid chain: Protein GrpE (184 aa).

Residues M1–D26 are disordered.

It belongs to the GrpE family. As to quaternary structure, homodimer.

The protein resides in the cytoplasm. Its function is as follows. Participates actively in the response to hyperosmotic and heat shock by preventing the aggregation of stress-denatured proteins, in association with DnaK and GrpE. It is the nucleotide exchange factor for DnaK and may function as a thermosensor. Unfolded proteins bind initially to DnaJ; upon interaction with the DnaJ-bound protein, DnaK hydrolyzes its bound ATP, resulting in the formation of a stable complex. GrpE releases ADP from DnaK; ATP binding to DnaK triggers the release of the substrate protein, thus completing the reaction cycle. Several rounds of ATP-dependent interactions between DnaJ, DnaK and GrpE are required for fully efficient folding. The polypeptide is Protein GrpE (Bordetella bronchiseptica (strain ATCC BAA-588 / NCTC 13252 / RB50) (Alcaligenes bronchisepticus)).